The sequence spans 517 residues: Amidophosphoribosyltransferase (517 aa).

Methionine 1 bears the N-acetylmethionine mark. A propeptide spanning residues methionine 1–glutamate 11 is cleaved from the precursor. The Nucleophile role is filled by cysteine 12. Residues cysteine 12–histidine 261 form the Glutamine amidotransferase type-2 domain. Residue cysteine 280 coordinates [4Fe-4S] cluster. Residues serine 327, aspartate 389, and aspartate 390 each coordinate Mg(2+). Residues cysteine 426, cysteine 503, and cysteine 506 each contribute to the [4Fe-4S] cluster site.

In the C-terminal section; belongs to the purine/pyrimidine phosphoribosyltransferase family. Homotetramer. It depends on Mg(2+) as a cofactor. Requires [4Fe-4S] cluster as cofactor. In terms of tissue distribution, expressed at a high level in brain, heart, liver and stomach.

It carries out the reaction 5-phospho-beta-D-ribosylamine + L-glutamate + diphosphate = 5-phospho-alpha-D-ribose 1-diphosphate + L-glutamine + H2O. It functions in the pathway purine metabolism; IMP biosynthesis via de novo pathway; N(1)-(5-phospho-D-ribosyl)glycinamide from 5-phospho-alpha-D-ribose 1-diphosphate: step 1/2. With respect to regulation, activated by the substrate 5-phospho-alpha-D-ribosyl-1-pyrophosphate and inhibited by the purine ribonucleotides, the end products of purine biosynthesis. Catalyzes the formation of phosphoribosylamine from phosphoribosylpyrophosphate (PRPP) and glutamine. The chain is Amidophosphoribosyltransferase (Ppat) from Rattus norvegicus (Rat).